A 156-amino-acid polypeptide reads, in one-letter code: tRNA (cytidine(34)-2'-O)-methyltransferase (156 aa).

Positions 102, 124, and 132 each coordinate S-adenosyl-L-methionine.

Belongs to the class IV-like SAM-binding methyltransferase superfamily. RNA methyltransferase TrmH family. TrmL subfamily. In terms of assembly, homodimer.

It localises to the cytoplasm. It carries out the reaction cytidine(34) in tRNA + S-adenosyl-L-methionine = 2'-O-methylcytidine(34) in tRNA + S-adenosyl-L-homocysteine + H(+). The catalysed reaction is 5-carboxymethylaminomethyluridine(34) in tRNA(Leu) + S-adenosyl-L-methionine = 5-carboxymethylaminomethyl-2'-O-methyluridine(34) in tRNA(Leu) + S-adenosyl-L-homocysteine + H(+). In terms of biological role, methylates the ribose at the nucleotide 34 wobble position in the two leucyl isoacceptors tRNA(Leu)(CmAA) and tRNA(Leu)(cmnm5UmAA). Catalyzes the methyl transfer from S-adenosyl-L-methionine to the 2'-OH of the wobble nucleotide. This is tRNA (cytidine(34)-2'-O)-methyltransferase from Burkholderia cenocepacia (strain HI2424).